Consider the following 319-residue polypeptide: Beta-ketoacyl-[acyl-carrier-protein] synthase III (319 aa).

Catalysis depends on residues Cys112 and His246. An ACP-binding region spans residues 247-251; sequence QANKR. The active site involves Asn276.

The protein belongs to the thiolase-like superfamily. FabH family. In terms of assembly, homodimer.

It is found in the cytoplasm. The enzyme catalyses malonyl-[ACP] + acetyl-CoA + H(+) = 3-oxobutanoyl-[ACP] + CO2 + CoA. The protein operates within lipid metabolism; fatty acid biosynthesis. Catalyzes the condensation reaction of fatty acid synthesis by the addition to an acyl acceptor of two carbons from malonyl-ACP. Catalyzes the first condensation reaction which initiates fatty acid synthesis and may therefore play a role in governing the total rate of fatty acid production. Possesses both acetoacetyl-ACP synthase and acetyl transacylase activities. Its substrate specificity determines the biosynthesis of branched-chain and/or straight-chain of fatty acids. This chain is Beta-ketoacyl-[acyl-carrier-protein] synthase III, found in Psychromonas ingrahamii (strain DSM 17664 / CCUG 51855 / 37).